The sequence spans 291 residues: Pyridoxal 5'-phosphate synthase subunit PdxS (291 aa).

Asp-23 contributes to the D-ribose 5-phosphate binding site. Catalysis depends on Lys-80, which acts as the Schiff-base intermediate with D-ribose 5-phosphate. Gly-152 contributes to the D-ribose 5-phosphate binding site. Arg-164 is a binding site for D-glyceraldehyde 3-phosphate. D-ribose 5-phosphate is bound by residues Gly-213 and 234-235 (GS).

The protein belongs to the PdxS/SNZ family. In the presence of PdxT, forms a dodecamer of heterodimers.

The catalysed reaction is aldehydo-D-ribose 5-phosphate + D-glyceraldehyde 3-phosphate + L-glutamine = pyridoxal 5'-phosphate + L-glutamate + phosphate + 3 H2O + H(+). Its pathway is cofactor biosynthesis; pyridoxal 5'-phosphate biosynthesis. In terms of biological role, catalyzes the formation of pyridoxal 5'-phosphate from ribose 5-phosphate (RBP), glyceraldehyde 3-phosphate (G3P) and ammonia. The ammonia is provided by the PdxT subunit. Can also use ribulose 5-phosphate and dihydroxyacetone phosphate as substrates, resulting from enzyme-catalyzed isomerization of RBP and G3P, respectively. The protein is Pyridoxal 5'-phosphate synthase subunit PdxS of Bifidobacterium longum (strain DJO10A).